Here is a 156-residue protein sequence, read N- to C-terminus: Transcription antitermination protein NusB (156 aa).

Belongs to the NusB family.

Involved in transcription antitermination. Required for transcription of ribosomal RNA (rRNA) genes. Binds specifically to the boxA antiterminator sequence of the ribosomal RNA (rrn) operons. The chain is Transcription antitermination protein NusB from Rickettsia akari (strain Hartford).